A 250-amino-acid chain; its full sequence is Expansin-like B1 (250 aa).

The N-terminal stretch at 1-24 is a signal peptide; that stretch reads MKHSHVLLLLFVQVIVLLPLLCLS. The Expansin-like EG45 domain maps to 45–149; the sequence is RGHCGYGEFG…QRIPCRYAGY (105 aa). N-linked (GlcNAc...) asparagine glycosylation occurs at Asn-72. The Expansin-like CBD domain maps to 163 to 245; the sequence is HYLAILVLYV…DWTAGATYDS (83 aa).

It belongs to the expansin family. Expansin-like B subfamily.

It is found in the secreted. This is Expansin-like B1 (EXLB1) from Arabidopsis thaliana (Mouse-ear cress).